A 503-amino-acid chain; its full sequence is Glutamate--tRNA ligase (503 aa).

The 'HIGH' region motif lies at 15–25; that stretch reads PSPTGHLHVGG. The 'KMSKS' region signature appears at 262–266; that stretch reads KLSKR. Residue Lys-265 coordinates ATP.

Belongs to the class-I aminoacyl-tRNA synthetase family. Glutamate--tRNA ligase type 1 subfamily. As to quaternary structure, monomer.

Its subcellular location is the cytoplasm. It carries out the reaction tRNA(Glu) + L-glutamate + ATP = L-glutamyl-tRNA(Glu) + AMP + diphosphate. Functionally, catalyzes the attachment of glutamate to tRNA(Glu) in a two-step reaction: glutamate is first activated by ATP to form Glu-AMP and then transferred to the acceptor end of tRNA(Glu). The sequence is that of Glutamate--tRNA ligase from Chlorobium phaeobacteroides (strain BS1).